Consider the following 470-residue polypeptide: 3-isopropylmalate dehydratase large subunit (470 aa).

Positions 348, 409, and 412 each coordinate [4Fe-4S] cluster.

Belongs to the aconitase/IPM isomerase family. LeuC type 1 subfamily. As to quaternary structure, heterodimer of LeuC and LeuD. It depends on [4Fe-4S] cluster as a cofactor.

The enzyme catalyses (2R,3S)-3-isopropylmalate = (2S)-2-isopropylmalate. Its pathway is amino-acid biosynthesis; L-leucine biosynthesis; L-leucine from 3-methyl-2-oxobutanoate: step 2/4. Functionally, catalyzes the isomerization between 2-isopropylmalate and 3-isopropylmalate, via the formation of 2-isopropylmaleate. In Thioalkalivibrio sulfidiphilus (strain HL-EbGR7), this protein is 3-isopropylmalate dehydratase large subunit.